A 469-amino-acid polypeptide reads, in one-letter code: Adenosylhomocysteinase (469 aa).

Residues threonine 63, aspartate 139, and glutamate 164 each contribute to the substrate site. Threonine 165–threonine 167 provides a ligand contact to NAD(+). Substrate contacts are provided by lysine 194 and aspartate 198. NAD(+) contacts are provided by residues asparagine 199, glycine 228–glycine 233, glutamate 251, asparagine 300, isoleucine 321–histidine 323, and asparagine 375.

This sequence belongs to the adenosylhomocysteinase family. It depends on NAD(+) as a cofactor.

It is found in the cytoplasm. It catalyses the reaction S-adenosyl-L-homocysteine + H2O = L-homocysteine + adenosine. Its pathway is amino-acid biosynthesis; L-homocysteine biosynthesis; L-homocysteine from S-adenosyl-L-homocysteine: step 1/1. In terms of biological role, may play a key role in the regulation of the intracellular concentration of adenosylhomocysteine. This is Adenosylhomocysteinase from Ectopseudomonas mendocina (strain ymp) (Pseudomonas mendocina).